A 417-amino-acid chain; its full sequence is Serine hydroxymethyltransferase 2 (417 aa).

(6S)-5,6,7,8-tetrahydrofolate is bound by residues L121 and 125 to 127; that span reads GHL. N6-(pyridoxal phosphate)lysine is present on K229. Residue 354-356 coordinates (6S)-5,6,7,8-tetrahydrofolate; sequence SPF.

Belongs to the SHMT family. Homodimer. Pyridoxal 5'-phosphate is required as a cofactor.

Its subcellular location is the cytoplasm. The enzyme catalyses (6R)-5,10-methylene-5,6,7,8-tetrahydrofolate + glycine + H2O = (6S)-5,6,7,8-tetrahydrofolate + L-serine. It functions in the pathway one-carbon metabolism; tetrahydrofolate interconversion. The protein operates within amino-acid biosynthesis; glycine biosynthesis; glycine from L-serine: step 1/1. In terms of biological role, catalyzes the reversible interconversion of serine and glycine with tetrahydrofolate (THF) serving as the one-carbon carrier. This reaction serves as the major source of one-carbon groups required for the biosynthesis of purines, thymidylate, methionine, and other important biomolecules. Also exhibits THF-independent aldolase activity toward beta-hydroxyamino acids, producing glycine and aldehydes, via a retro-aldol mechanism. The sequence is that of Serine hydroxymethyltransferase 2 from Pseudomonas putida (strain ATCC 47054 / DSM 6125 / CFBP 8728 / NCIMB 11950 / KT2440).